The sequence spans 248 residues: Ras-like protein family member 11B (248 aa).

The small GTPase-like stretch occupies residues 29–246 (AGRRLVKIAV…ALSAKVRTVT (218 aa)). Residues 40 to 47 (GASGVGKT), 87 to 91 (DTPGI), and 152 to 155 (NKAD) each bind GTP. The disordered stretch occupies residues 205–229 (QQPSGTPEKRRTSLIPRPKSPNMQD).

It belongs to the small GTPase superfamily. Ras family.

The enzyme catalyses GTP + H2O = GDP + phosphate + H(+). The chain is Ras-like protein family member 11B from Bos taurus (Bovine).